Here is a 310-residue protein sequence, read N- to C-terminus: Thioredoxin reductase (310 aa).

Residue 34 to 41 (NGMQPGGQ) participates in FAD binding. An intrachain disulfide couples C135 to C138. 281-290 (DVQDKIYRQA) provides a ligand contact to FAD.

This sequence belongs to the class-II pyridine nucleotide-disulfide oxidoreductase family. In terms of assembly, homodimer. The cofactor is FAD.

Its subcellular location is the cytoplasm. It carries out the reaction [thioredoxin]-dithiol + NADP(+) = [thioredoxin]-disulfide + NADPH + H(+). This Rickettsia felis (strain ATCC VR-1525 / URRWXCal2) (Rickettsia azadi) protein is Thioredoxin reductase (trxB).